The following is an 81-amino-acid chain: Neuronatin (81 aa).

Belongs to the neuronatin family.

Its function is as follows. May participate in the maintenance of segment identity in the hindbrain and pituitary development, and maturation or maintenance of the overall structure of the nervous system. May function as a regulatory subunit of ion channels. This is Neuronatin (NNAT) from Homo sapiens (Human).